We begin with the raw amino-acid sequence, 485 residues long: MTITPQHLIALLPLLIVGLTVVVVMLSIAWRRNHFLNATLSVIGLNAALVSLWFVGQAGAMDVTPLMRVDGFAMLYTGLVLLASLATCTFAYPWLEGYNDNQEEFYLLVLIASLGGILLANANHLAALFLGIELISLPLFGLIGYAFRQKRSLEASIKYTILSAAASSFLLFGMALVYAQSGNLSFEALGKSLGDGMLREPLLLAGFGLMIVGLGFKLSLVPFHLWTPDVYQGAPAPVSTFLATASKIAIFGVVMRLFLYAPVGDSEAVRVVLGIIAFASIIFGNLMALSQTNIKRLLGYSSISHLGYLLVALIALQSGEMSMEAVGVYLAGYLFSSLGAFGVVSLMSSPFRGPDADSLFSYRGLFWHRPVLAAVMTVMMLSLAGIPMTLGFIGKFYVLAVGVQASLWWLVAAVVVGSAIGLYYYLRVAVSLYLHAPQQPGRDAPINWQYSAGGIVVLISALLVLVLGVWPQPLISLVQLATPLM.

14 helical membrane passes run 8–28, 35–55, 71–91, 105–125, 127–147, 159–179, 203–223, 235–255, 271–291, 297–317, 326–346, 373–393, 408–430, and 455–475; these read LIALLPLLIVGLTVVVVMLSI, FLNATLSVIGLNAALVSLWFV, GFAMLYTGLVLLASLATCTFA, FYLLVLIASLGGILLANANHL, ALFLGIELISLPLFGLIGYAF, YTILSAAASSFLLFGMALVYA, LLAGFGLMIVGLGFKLSLVPF, PAPVSTFLATASKIAIFGVVM, VVLGIIAFASIIFGNLMALSQ, LLGYSSISHLGYLLVALIALQ, VGVYLAGYLFSSLGAFGVVSL, AAVMTVMMLSLAGIPMTLGFI, WWLVAAVVVGSAIGLYYYLRVAV, and IVVLISALLVLVLGVWPQPLI.

Belongs to the complex I subunit 2 family. NDH-1 is composed of 13 different subunits. Subunits NuoA, H, J, K, L, M, N constitute the membrane sector of the complex.

The protein localises to the cell inner membrane. The enzyme catalyses a quinone + NADH + 5 H(+)(in) = a quinol + NAD(+) + 4 H(+)(out). In terms of biological role, NDH-1 shuttles electrons from NADH, via FMN and iron-sulfur (Fe-S) centers, to quinones in the respiratory chain. The immediate electron acceptor for the enzyme in this species is believed to be ubiquinone. Couples the redox reaction to proton translocation (for every two electrons transferred, four hydrogen ions are translocated across the cytoplasmic membrane), and thus conserves the redox energy in a proton gradient. This chain is NADH-quinone oxidoreductase subunit N, found in Salmonella arizonae (strain ATCC BAA-731 / CDC346-86 / RSK2980).